The chain runs to 258 residues: Heat-labile enterotoxin A chain (258 aa).

A signal peptide spans 1 to 18 (MKNITFIFFILLASPLYA). 25 to 39 (RADSRPPDEIKRSGG) serves as a coordination point for NAD(+). Glu-130 is an active-site residue. Residues Cys-205 and Cys-217 are joined by a disulfide bond.

It belongs to the enterotoxin A family. Heterohexamer of one A chain and of five B chains.

In terms of biological role, the biological activity of the toxin is produced by the A chain, which activates intracellular adenyl cyclase. In Escherichia coli, this protein is Heat-labile enterotoxin A chain (eltA).